The sequence spans 447 residues: Argininosuccinate synthase (447 aa).

Residues 17-25 (AFSGGLDTS) and Ala43 each bind ATP. Residue Tyr99 participates in L-citrulline binding. Residues Gly129 and Thr131 each coordinate ATP. 3 residues coordinate L-aspartate: Thr131, Asn135, and Asp136. Asn135 contacts L-citrulline. An ATP-binding site is contributed by Asp136. L-citrulline is bound by residues Arg139 and Ser192. Asp194 contacts ATP. Positions 201, 203, and 280 each coordinate L-citrulline.

The protein belongs to the argininosuccinate synthase family. Type 2 subfamily. Homotetramer.

It is found in the cytoplasm. The enzyme catalyses L-citrulline + L-aspartate + ATP = 2-(N(omega)-L-arginino)succinate + AMP + diphosphate + H(+). It participates in amino-acid biosynthesis; L-arginine biosynthesis; L-arginine from L-ornithine and carbamoyl phosphate: step 2/3. The polypeptide is Argininosuccinate synthase (argG) (Escherichia coli O157:H7).